The primary structure comprises 397 residues: Elongation factor Tu-1 (397 aa).

Residues Lys10–Glu206 form the tr-type G domain. Positions Gly19–Thr26 are G1. Residue Gly19–Thr26 participates in GTP binding. A Mg(2+)-binding site is contributed by Thr26. Residues Gly62–Ser66 form a G2 region. The tract at residues Asp83–Gly86 is G3. Residues Asp83–His87 and Asn138–Asp141 contribute to the GTP site. The segment at Asn138 to Asp141 is G4. The interval Ser176–Leu178 is G5.

It belongs to the TRAFAC class translation factor GTPase superfamily. Classic translation factor GTPase family. EF-Tu/EF-1A subfamily. In terms of assembly, monomer.

The protein localises to the cytoplasm. It carries out the reaction GTP + H2O = GDP + phosphate + H(+). Its function is as follows. GTP hydrolase that promotes the GTP-dependent binding of aminoacyl-tRNA to the A-site of ribosomes during protein biosynthesis. This Streptomyces coelicolor (strain ATCC BAA-471 / A3(2) / M145) protein is Elongation factor Tu-1.